Consider the following 203-residue polypeptide: Peptidyl-tRNA hydrolase (203 aa).

Tyr26 is a tRNA binding site. The active-site Proton acceptor is the His31. TRNA-binding residues include Tyr82, Asn84, and Asn130.

It belongs to the PTH family. Monomer.

It is found in the cytoplasm. The enzyme catalyses an N-acyl-L-alpha-aminoacyl-tRNA + H2O = an N-acyl-L-amino acid + a tRNA + H(+). Functionally, hydrolyzes ribosome-free peptidyl-tRNAs (with 1 or more amino acids incorporated), which drop off the ribosome during protein synthesis, or as a result of ribosome stalling. In terms of biological role, catalyzes the release of premature peptidyl moieties from peptidyl-tRNA molecules trapped in stalled 50S ribosomal subunits, and thus maintains levels of free tRNAs and 50S ribosomes. The chain is Peptidyl-tRNA hydrolase from Streptomyces avermitilis (strain ATCC 31267 / DSM 46492 / JCM 5070 / NBRC 14893 / NCIMB 12804 / NRRL 8165 / MA-4680).